A 297-amino-acid chain; its full sequence is Protein LRATD1 (297 aa).

S38 is modified (phosphoserine). One can recognise an LRAT domain in the interval 138 to 233 (PAPEPPAPAP…CRFGKREFKA (96 aa)).

Belongs to the LRATD family.

Its subcellular location is the cytoplasm. Its function is as follows. May play a role in cell morphology and motility. The sequence is that of Protein LRATD1 (LRATD1) from Bos taurus (Bovine).